Reading from the N-terminus, the 674-residue chain is Primary amine oxidase (674 aa).

Positions 1–25 are cleaved as a signal peptide; it reads MASTTTMRLALFSVLTLLSFHAVVS. Asn156 carries an N-linked (GlcNAc...) asparagine glycan. A disulfide bridge connects residues Cys162 and Cys183. The segment covering 226–236 has biased composition (polar residues); sequence ENTEYQVSKQS. Positions 226–251 are disordered; it reads ENTEYQVSKQSPPFGPKQHSLTSHQP. 323–334 is a substrate binding site; the sequence is FFDSGEFGFGLS. The Proton acceptor role is filled by Asp325. A disulfide bridge links Cys344 with Cys370. An N-linked (GlcNAc...) asparagine glycan is attached at Asn389. 409–414 contacts substrate; the sequence is VGNYDN. Tyr412 functions as the Schiff-base intermediate with substrate; via topaquinone in the catalytic mechanism. Tyr412 bears the 2',4',5'-topaquinone mark. The Cu cation site is built by His467 and His469. Residues Asp476, Phe477, Asp478, Asp617, and Ile618 each coordinate Mn(2+). His628 contacts Cu cation.

Belongs to the copper/topaquinone oxidase family. In terms of assembly, homodimer. Cu cation serves as cofactor. The cofactor is Mn(2+). L-topaquinone is required as a cofactor. Post-translationally, topaquinone (TPQ) is generated by copper-dependent autoxidation of a specific tyrosyl residue.

The enzyme catalyses a primary methyl amine + O2 + H2O = an aldehyde + H2O2 + NH4(+). This Pisum sativum (Garden pea) protein is Primary amine oxidase.